Consider the following 111-residue polypeptide: uncharacterized protein (111 aa).

The protein resides in the cytoplasm. It is found in the nucleus. This is an uncharacterized protein from Saccharomyces cerevisiae (strain ATCC 204508 / S288c) (Baker's yeast).